The sequence spans 622 residues: tRNA uridine 5-carboxymethylaminomethyl modification enzyme MnmG (622 aa).

10 to 15 provides a ligand contact to FAD; the sequence is GGGHAG. Position 269 to 283 (269 to 283) interacts with NAD(+); it reads GPRYCPSVEDKIVKF.

Belongs to the MnmG family. In terms of assembly, homodimer. Heterotetramer of two MnmE and two MnmG subunits. It depends on FAD as a cofactor.

It is found in the cytoplasm. NAD-binding protein involved in the addition of a carboxymethylaminomethyl (cmnm) group at the wobble position (U34) of certain tRNAs, forming tRNA-cmnm(5)s(2)U34. In Bartonella quintana (strain Toulouse) (Rochalimaea quintana), this protein is tRNA uridine 5-carboxymethylaminomethyl modification enzyme MnmG.